A 554-amino-acid polypeptide reads, in one-letter code: DnaJ homolog subfamily C member 1 (554 aa).

The N-terminal stretch at 1 to 47 (MTAPCSQPAQLPGRRQLGLVPFPPPPPRTPLLWLLLLLLAAVAPARG) is a signal peptide. The Lumenal portion of the chain corresponds to 48 to 153 (WESGDLELFD…RRVRKMSNAE (106 aa)). The J domain maps to 65 to 129 (NFYQFLGVQQ…ERRQRYDDIL (65 aa)). Residues 154-174 (LALLLFIILTVGHYAVVWSIY) form a helical membrane-spanning segment. At 175-554 (LEKQLDELLS…LVQKKKQAKS (380 aa)) the chain is on the cytoplasmic side. An SANT 1 domain is found at 325–379 (KQAPEWTEEDLSQLTRSMVKFPGGTPGRWEKIAHELGRSVTDVTTKAKQLKDSVT). Phosphoserine is present on serine 381. Polar residues predominate over residues 392–405 (STVQNSRPIKTATT). A disordered region spans residues 392 to 500 (STVQNSRPIK…RSAEEPWTQN (109 aa)). The span at 421–432 (AAEEEQEGDSGE) shows a compositional bias: acidic residues. A Phosphoserine modification is found at serine 430. Over residues 455–472 (AKPEPEEKSRAKRQKDFD) the composition is skewed to basic and acidic residues. The segment covering 473–482 (IAEQNESSDE) has biased composition (acidic residues). Serine 479, serine 480, serine 484, and serine 492 each carry phosphoserine. Residues 483–494 (ESLRKERARSAE) are compositionally biased toward basic and acidic residues. The region spanning 492–547 (SAEEPWTQNQQKLLELALQQYPRGSSDRWDKIARCVPSKSKEDCIARYKLLVELVQ) is the SANT 2 domain.

In terms of assembly, interacts (via J domain) with HSPA5. Interacts (via cytosolic domain) with ribosomes. Interacts (via SANT 2 domain) with SERPINA3; the interaction delays the formation of the covalent inhibitory complex SERPINA3-chymotrypsin, but does not alter the catalytic activity of SERPINA3. Interacts (via SANT 2 domain) with ITIH4 (via C-terminus); the interaction protects ITIH4 against in vitro cleavage by kallikrein.

Its subcellular location is the endoplasmic reticulum membrane. The protein resides in the nucleus membrane. It is found in the microsome membrane. In terms of biological role, may modulate protein synthesis. The protein is DnaJ homolog subfamily C member 1 (DNAJC1) of Homo sapiens (Human).